Consider the following 574-residue polypeptide: Squalene monooxygenase (574 aa).

Over M1–F20 the chain is Cytoplasmic. The tract at residues M1–K100 is interaction with MARCHF6. Residues I21–V41 lie within the membrane without spanning it. The Cytoplasmic portion of the chain corresponds to L42 to H574. A required for degradation in response to high membrane cholesterol levels region spans residues Q62–L73. Positions T118–H574 are sufficient for enzyme activity. FAD contacts are provided by residues V133 to L134, E153 to R154, R161, F166, R234, V250, D408, and M421. The interval P516–H574 is hydrophobic; mediates interaction with membranes.

The protein belongs to the squalene monooxygenase family. Interacts (via N-terminal domain) with MARCHF6. Interacts with SMIM22; this interaction modulates lipid droplet formation. Requires FAD as cofactor. Post-translationally, ubiquitinated by MARCHF6 in response to high cholesterol levels in intracellular membranes, leading to proteasomal degradation. Detected in liver (at protein level).

The protein localises to the microsome membrane. It localises to the endoplasmic reticulum membrane. The enzyme catalyses squalene + reduced [NADPH--hemoprotein reductase] + O2 = (S)-2,3-epoxysqualene + oxidized [NADPH--hemoprotein reductase] + H2O + H(+). The protein operates within terpene metabolism; lanosterol biosynthesis; lanosterol from farnesyl diphosphate: step 2/3. Inhibited by NB-598 ((E)N-ethyl-N-(6,6-dimethyl-2-hepten-4-ynyl)-3-[(3,3'-bi-thiophen-5-yl)methoxy]benzene-methanamine). Contrary to fungal enzymes, the mammalian enzyme is only slightly inhibited by terbinafine. Inhibited by tellurite, tellurium dioxide, selenite, and selenium dioxide. In terms of biological role, catalyzes the stereospecific oxidation of squalene to (S)-2,3-epoxysqualene, and is considered to be a rate-limiting enzyme in steroid biosynthesis. In Homo sapiens (Human), this protein is Squalene monooxygenase (SQLE).